We begin with the raw amino-acid sequence, 483 residues long: Regulatory protein ViaA (483 aa).

The protein belongs to the ViaA family. In terms of assembly, homodimer. Interacts with RavA.

The protein localises to the cytoplasm. Its function is as follows. Component of the RavA-ViaA chaperone complex, which may act on the membrane to optimize the function of some of the respiratory chains. ViaA stimulates the ATPase activity of RavA. This Escherichia fergusonii (strain ATCC 35469 / DSM 13698 / CCUG 18766 / IAM 14443 / JCM 21226 / LMG 7866 / NBRC 102419 / NCTC 12128 / CDC 0568-73) protein is Regulatory protein ViaA.